The sequence spans 368 residues: Trans-enoyl reductase TwmE (368 aa).

49–52 (SDYK) serves as a coordination point for NADP(+). A substrate-binding site is contributed by 135 to 142 (FKAATLGT). NADP(+)-binding positions include 204–207 (SPRS), Tyr222, and 269–270 (LE). 290–294 (SAELY) serves as a coordination point for substrate. Position 360 to 361 (360 to 361 (HP)) interacts with NADP(+).

It belongs to the zinc-containing alcohol dehydrogenase family. In terms of assembly, monomer.

It participates in secondary metabolite biosynthesis. In terms of biological role, trans-enoyl reductase; part of the gene cluster that mediates the biosynthesis of wortmanamides A and B, reduced long-chain polyketides amidated with a specific omega-amino acid, 5-aminopentanoic acid (5PA). The PKS modules of TwmB are involved in the synthesis of the polyketide backbone, whereas the non-canonical C domain of TwmB is a bonafide condensation domain that specifically selects 5PA and catalyzes amidation to release polyketide chain. The C domain clearly prefers C16 and C18 fatty acyl substrates, which is consistent with simultaneous formation of both octaketide and nonaketide acyl amides wortmanamides A and B. Because TwmB lacks a designated enoylreductase (ER) domain, the required activity is provided the enoyl reductase TwmE. The roles of the remaining enzymes have still to be clarified. This is Trans-enoyl reductase TwmE from Talaromyces wortmannii (Penicillium wortmannii).